Consider the following 372-residue polypeptide: NAD(P)H-quinone oxidoreductase subunit 1 (372 aa).

The next 9 membrane-spanning stretches (helical) occupy residues 27-47 (TIWL…GVLV), 65-85 (PEYI…KLVF), 97-117 (WLFT…YLIV), 128-148 (LGIG…GLLM), 176-196 (LALA…IDIV), 204-224 (ILGW…IAAL), 249-269 (YAGM…VLSS), 308-328 (GLGL…AILL), and 351-371 (VGLV…FAFG).

It belongs to the complex I subunit 1 family. In terms of assembly, NDH-1 is composed of at least 11 different subunits.

The protein resides in the cellular thylakoid membrane. The catalysed reaction is a plastoquinone + NADH + (n+1) H(+)(in) = a plastoquinol + NAD(+) + n H(+)(out). It catalyses the reaction a plastoquinone + NADPH + (n+1) H(+)(in) = a plastoquinol + NADP(+) + n H(+)(out). In terms of biological role, NDH-1 shuttles electrons from an unknown electron donor, via FMN and iron-sulfur (Fe-S) centers, to quinones in the respiratory and/or the photosynthetic chain. The immediate electron acceptor for the enzyme in this species is believed to be plastoquinone. Couples the redox reaction to proton translocation, and thus conserves the redox energy in a proton gradient. This chain is NAD(P)H-quinone oxidoreductase subunit 1, found in Acaryochloris marina (strain MBIC 11017).